The primary structure comprises 97 residues: Integration host factor subunit alpha (97 aa).

Belongs to the bacterial histone-like protein family. In terms of assembly, heterodimer of an alpha and a beta chain.

Functionally, this protein is one of the two subunits of integration host factor, a specific DNA-binding protein that functions in genetic recombination as well as in transcriptional and translational control. In Histophilus somni (strain 2336) (Haemophilus somnus), this protein is Integration host factor subunit alpha.